A 257-amino-acid chain; its full sequence is UPF0246 protein SO_3540 (257 aa).

Belongs to the UPF0246 family.

The protein is UPF0246 protein SO_3540 of Shewanella oneidensis (strain ATCC 700550 / JCM 31522 / CIP 106686 / LMG 19005 / NCIMB 14063 / MR-1).